Reading from the N-terminus, the 103-residue chain is Small ribosomal subunit protein uS10 (103 aa).

Belongs to the universal ribosomal protein uS10 family. In terms of assembly, part of the 30S ribosomal subunit.

Functionally, involved in the binding of tRNA to the ribosomes. The polypeptide is Small ribosomal subunit protein uS10 (Chlorobaculum parvum (strain DSM 263 / NCIMB 8327) (Chlorobium vibrioforme subsp. thiosulfatophilum)).